Consider the following 491-residue polypeptide: Glutamyl-tRNA(Gln) amidotransferase subunit A (491 aa).

Catalysis depends on charge relay system residues K76 and S154. The active-site Acyl-ester intermediate is the S178.

It belongs to the amidase family. GatA subfamily. Heterotrimer of A, B and C subunits.

The enzyme catalyses L-glutamyl-tRNA(Gln) + L-glutamine + ATP + H2O = L-glutaminyl-tRNA(Gln) + L-glutamate + ADP + phosphate + H(+). Its function is as follows. Allows the formation of correctly charged Gln-tRNA(Gln) through the transamidation of misacylated Glu-tRNA(Gln) in organisms which lack glutaminyl-tRNA synthetase. The reaction takes place in the presence of glutamine and ATP through an activated gamma-phospho-Glu-tRNA(Gln). In Cereibacter sphaeroides (strain KD131 / KCTC 12085) (Rhodobacter sphaeroides), this protein is Glutamyl-tRNA(Gln) amidotransferase subunit A.